The following is a 362-amino-acid chain: Adenosine deaminase (362 aa).

Zn(2+) is bound by residues His41 and His43. Position 43–45 (43–45) interacts with a purine D-ribonucleoside; it reads HLD. The segment at 169–183 is gating helix loop; regulates binding affinity for substrates and thus substrate selectivity; that stretch reads IGETGISEESLRKAA. Residue Gly200 coordinates a purine D-ribonucleoside. His225 is a binding site for Zn(2+). Residues Glu228, His252, and Asp309 each contribute to the a purine D-ribonucleoside site. Residue Asp309 participates in Zn(2+) binding.

The protein belongs to the metallo-dependent hydrolases superfamily. Adenosine and AMP deaminases family. The cofactor is Zn(2+).

It catalyses the reaction adenosine + H2O + H(+) = inosine + NH4(+). It participates in purine metabolism; purine nucleoside salvage. Its activity is regulated as follows. Inhibited by coformycin but not by methylthiocoformycin (MT-coformycin). Its function is as follows. Catalyzes the hydrolytic deamination of adenosine to produce inosine. Unlike other Plasmodium adenosine deaminases, does not catalyze the deamination of 5'-methylthioadenosine (MTA). Plays an essential role in the purine salvage pathway which allows the parasite to use host cell purines for the synthesis of nucleic acids. In Plasmodium gallinaceum, this protein is Adenosine deaminase.